Here is a 210-residue protein sequence, read N- to C-terminus: Protein GET1 (210 aa).

The Lumenal portion of the chain corresponds to 1-4 (MPSL). A helical transmembrane segment spans residues 5–24 (LIIVLIIHVVTYLINTIGAN). Residues 25–110 (TIDSLLWLLY…SFDLAVKSIR (86 aa)) are Cytoplasmic-facing. Residues 39–95 (NQTSQTANEQRRLKREVMQLKREMNATSSQDEFAKWAKLRRRHDKTMEEYEAKNKAL) are a coiled coil. A helical transmembrane segment spans residues 111 to 131 (FFSTTGLKLFLQFWCSKTPIF). Residues 132–155 (ELPRGWIPWQVEWVLSFPRAPLGT) are Lumenal-facing. Residues 156 to 172 (VSIQIWGGVCATVVSLA) traverse the membrane as a helical segment. Residues 173 to 210 (GDAIGVVNVYLTSKAPKQKEPATSGENSARPMAIKKEL) lie on the Cytoplasmic side of the membrane. The segment at 189-210 (KQKEPATSGENSARPMAIKKEL) is disordered.

The protein belongs to the WRB/GET1 family. In terms of assembly, interacts with GET3.

It is found in the endoplasmic reticulum membrane. Functionally, required for the post-translational delivery of tail-anchored (TA) proteins to the endoplasmic reticulum. Acts as a membrane receptor for soluble GET3, which recognizes and selectively binds the transmembrane domain of TA proteins in the cytosol. This chain is Protein GET1, found in Coccidioides immitis (strain RS) (Valley fever fungus).